Consider the following 1016-residue polypeptide: Mediator of RNA polymerase II transcription subunit 5 (1016 aa).

This sequence belongs to the Mediator complex subunit 5 family. Component of the Mediator complex.

Its subcellular location is the nucleus. Functionally, component of the Mediator complex, a coactivator involved in the regulated transcription of nearly all RNA polymerase II-dependent genes. Mediator functions as a bridge to convey information from gene-specific regulatory proteins to the basal RNA polymerase II transcription machinery. Mediator is recruited to promoters by direct interactions with regulatory proteins and serves as a scaffold for the assembly of a functional preinitiation complex with RNA polymerase II and the general transcription factors. This Aspergillus terreus (strain NIH 2624 / FGSC A1156) protein is Mediator of RNA polymerase II transcription subunit 5 (nut1).